A 423-amino-acid polypeptide reads, in one-letter code: Acetylornithine aminotransferase, mitochondrial (423 aa).

The transit peptide at 1–13 (MFKRYLSSTSSRR) directs the protein to the mitochondrion. Residue K276 is modified to N6-(pyridoxal phosphate)lysine.

The protein belongs to the class-III pyridoxal-phosphate-dependent aminotransferase family. Pyridoxal 5'-phosphate serves as cofactor.

Its subcellular location is the mitochondrion matrix. It carries out the reaction N(2)-acetyl-L-ornithine + 2-oxoglutarate = N-acetyl-L-glutamate 5-semialdehyde + L-glutamate. It functions in the pathway amino-acid biosynthesis; L-arginine biosynthesis; N(2)-acetyl-L-ornithine from L-glutamate: step 4/4. Its function is as follows. catalyzes the conversion of N-acetylglutamate-gamma-semialdehyde (NAGSA) to N-acetylornithine in arginine biosynthesis. The chain is Acetylornithine aminotransferase, mitochondrial (ARG8) from Saccharomyces cerevisiae (strain ATCC 204508 / S288c) (Baker's yeast).